Here is a 745-residue protein sequence, read N- to C-terminus: Elongation factor G, mitochondrial (745 aa).

The tr-type G domain maps to Glu-40–Gly-317. GTP-binding positions include Ala-49 to Thr-56, Asp-116 to His-120, and Asn-170 to Asp-173.

This sequence belongs to the TRAFAC class translation factor GTPase superfamily. Classic translation factor GTPase family. EF-G/EF-2 subfamily.

The protein resides in the mitochondrion. It functions in the pathway protein biosynthesis; polypeptide chain elongation. In terms of biological role, mitochondrial GTPase that catalyzes the GTP-dependent ribosomal translocation step during translation elongation. During this step, the ribosome changes from the pre-translocational (PRE) to the post-translocational (POST) state as the newly formed A-site-bound peptidyl-tRNA and P-site-bound deacylated tRNA move to the P and E sites, respectively. Catalyzes the coordinated movement of the two tRNA molecules, the mRNA and conformational changes in the ribosome. Essential during development as it acts as a retrograde signal from mitochondria to the nucleus to slow down cell proliferation if mitochondrial energy output is low. In Drosophila erecta (Fruit fly), this protein is Elongation factor G, mitochondrial.